A 78-amino-acid chain; its full sequence is Protein M6 (78 aa).

The protein belongs to the A9/FIL1 family. As to expression, tapetum of anthers.

It localises to the secreted. This is Protein M6 (M6) from Lilium henryi (Henry's lily).